A 41-amino-acid polypeptide reads, in one-letter code: uncharacterized protein (41 aa).

A disordered region spans residues 1 to 41 (MGKKHRNRITGQKKNNHIPEKDIIAAEEAHGKEYSAAKRKP). A compositionally biased stretch (basic and acidic residues) spans 17–41 (HIPEKDIIAAEEAHGKEYSAAKRKP).

This is an uncharacterized protein from Bacillus subtilis (strain 168).